Consider the following 299-residue polypeptide: UDP-N-acetylenolpyruvoylglucosamine reductase (299 aa).

An FAD-binding PCMH-type domain is found at 21–189; it reads RVGGPAQWLL…LSARFRLEPG (169 aa). R168 is an active-site residue. Catalysis depends on S219, which acts as the Proton donor. E289 is an active-site residue.

Belongs to the MurB family. FAD serves as cofactor.

Its subcellular location is the cytoplasm. The enzyme catalyses UDP-N-acetyl-alpha-D-muramate + NADP(+) = UDP-N-acetyl-3-O-(1-carboxyvinyl)-alpha-D-glucosamine + NADPH + H(+). It functions in the pathway cell wall biogenesis; peptidoglycan biosynthesis. Functionally, cell wall formation. This Parasynechococcus marenigrum (strain WH8102) protein is UDP-N-acetylenolpyruvoylglucosamine reductase.